Consider the following 846-residue polypeptide: Disrupted in schizophrenia 1 homolog (846 aa).

Disordered regions lie at residues 1 to 53 (MQGA…IGFL), 127 to 147 (HSGV…GDSG), 231 to 257 (EAEP…GEPR), 277 to 312 (TRSN…QDGG), and 409 to 436 (LHGA…AQDS). Positions 1–288 (MQGAGSRGAW…SNRQPECGMV (288 aa)) are interaction with MAP1A. Composition is skewed to basic and acidic residues over residues 133–143 (GNDRRQSERLT) and 248–257 (GSDRPHGEPR). Residues 277–300 (TRSNRQPECGMVSSSDAGFSSQDA) are compositionally biased toward polar residues. The interaction with TRAF3IP1 stretch occupies residues 289–686 (SSSDAGFSSQ…LERVWKADLE (398 aa)). Positions 429–587 (RRTTAQDSLP…LLEAKMLALS (159 aa)) are required for localization to punctate cytoplasmic foci. The interval 435–846 (DSLPGLAVTR…STAGAQEAED (412 aa)) is necessary and sufficient for interaction with PCNT and localization at the centrosome. The stretch at 440-489 (LAVTRRDWLMREKEQLQKEIEALRARVSVLEAKEQRLSQELEDQEMLLRW) forms a coiled coil. The interaction with ATF4 and ATF5 stretch occupies residues 588 to 846 (GSCFSTAKEL…STAGAQEAED (259 aa)). The tract at residues 721–846 (TAALAVPRTP…STAGAQEAED (126 aa)) is interaction with NDEL1 and PAFAH1B1. The interval 721 to 846 (TAALAVPRTP…STAGAQEAED (126 aa)) is interaction with PAFAH1B1. The tract at residues 795–828 (GHDEALFQSLQGELQMVKETLQTMFLQLQPAKEA) is interaction with NDEL1.

Interacts with NDEL1. Interacts with CCDC88A (via C-terminus); the interaction is direct. Interacts with GSK3B. Interacts with tubulin alpha, ACTN2, ANKHD1, ATF4, ATF5, CEP63, EIF3S3, MAP1A, NDEL1, PAFAH1B1, RANBP9, SPTBN4, SYNE1 and TRAF3IP1. Interaction with microtubules may be mediated in part by TRAF3IP1. Interacts (via C-terminal) with PCNT. Interacts with CHCHD6. Interacts with CCDC141. Interacts with FBXW7, the substrate-recognition component of a SCF (SKP1-CUL1-F-box protein) E3 ubiquitin-protein ligase complex; the interaction targets DISC1 for proteasomal degradation. Interacts with ZNF365. Interacts with ATF4; inhibiting ATF4 transcription factor activity by disrupting ATF4 dimerization and DNA-binding. Interacts with PDE4B. In terms of processing, ubiquitinated. Ubiquitination with 'Lys-48'-linked polyubiquitin chains leads to its proteasomal degradation. Expressed in brain, heart, kidney, liver and thymus. Within the brain expression is high in the cerebral cortex, hippocampus and olfactory bulb and is also seen at lower levels in the cerebellum (at protein level).

It localises to the cytoplasm. The protein localises to the cytoskeleton. The protein resides in the mitochondrion. It is found in the microtubule organizing center. Its subcellular location is the centrosome. It localises to the postsynaptic density. In terms of biological role, involved in the regulation of multiple aspects of embryonic and adult neurogenesis. Required for neural progenitor proliferation in the ventrical/subventrical zone during embryonic brain development and in the adult dentate gyrus of the hippocampus. Participates in the Wnt-mediated neural progenitor proliferation as a positive regulator by modulating GSK3B activity and CTNNB1 abundance. Plays a role as a modulator of the AKT-mTOR signaling pathway controlling the tempo of the process of newborn neurons integration during adult neurogenesis, including neuron positioning, dendritic development and synapse formation. Inhibits the activation of AKT-mTOR signaling upon interaction with CCDC88A. Regulates the migration of early-born granule cell precursors toward the dentate gyrus during the hippocampal development. Inhibits ATF4 transcription factor activity in neurons by disrupting ATF4 dimerization and DNA-binding. Plays a role, together with PCNT, in the microtubule network formation. The sequence is that of Disrupted in schizophrenia 1 homolog from Rattus norvegicus (Rat).